A 363-amino-acid chain; its full sequence is Methylthioribose-1-phosphate isomerase (363 aa).

The active-site Proton donor is Asp253.

It belongs to the eIF-2B alpha/beta/delta subunits family. MtnA subfamily.

It localises to the cytoplasm. The protein resides in the nucleus. It catalyses the reaction 5-(methylsulfanyl)-alpha-D-ribose 1-phosphate = 5-(methylsulfanyl)-D-ribulose 1-phosphate. It participates in amino-acid biosynthesis; L-methionine biosynthesis via salvage pathway; L-methionine from S-methyl-5-thio-alpha-D-ribose 1-phosphate: step 1/6. In terms of biological role, catalyzes the interconversion of methylthioribose-1-phosphate (MTR-1-P) into methylthioribulose-1-phosphate (MTRu-1-P). This is Methylthioribose-1-phosphate isomerase from Drosophila grimshawi (Hawaiian fruit fly).